The chain runs to 309 residues: Homoserine O-succinyltransferase (309 aa).

C142 (acyl-thioester intermediate) is an active-site residue. 2 residues coordinate substrate: K163 and S192. Residue H235 is the Proton acceptor of the active site. Residue E237 is part of the active site. R249 contacts substrate.

Belongs to the MetA family. As to quaternary structure, homodimer.

It localises to the cytoplasm. The enzyme catalyses L-homoserine + succinyl-CoA = O-succinyl-L-homoserine + CoA. It participates in amino-acid biosynthesis; L-methionine biosynthesis via de novo pathway; O-succinyl-L-homoserine from L-homoserine: step 1/1. Transfers a succinyl group from succinyl-CoA to L-homoserine, forming succinyl-L-homoserine. The polypeptide is Homoserine O-succinyltransferase (Shigella sonnei (strain Ss046)).